A 336-amino-acid chain; its full sequence is Holliday junction branch migration complex subunit RuvB (336 aa).

The segment at 1-180 (MRRTGIRLSW…FGIVEHLEYY (180 aa)) is large ATPase domain (RuvB-L). ATP contacts are provided by residues Leu18, Arg19, Gly60, Lys63, Thr64, Thr65, 127–129 (EDF), Arg170, Tyr180, and Arg217. Residue Thr64 participates in Mg(2+) binding. The small ATPAse domain (RuvB-S) stretch occupies residues 181–251 (TPEELAQGVM…RALEALAALG (71 aa)). The head domain (RuvB-H) stretch occupies residues 254–336 (ELGLEKRDRE…PPPVGPLLEP (83 aa)). DNA contacts are provided by Arg309 and Arg314.

The protein belongs to the RuvB family. As to quaternary structure, homohexamer. Forms an RuvA(8)-RuvB(12)-Holliday junction (HJ) complex. HJ DNA is sandwiched between 2 RuvA tetramers; dsDNA enters through RuvA and exits via RuvB. An RuvB hexamer assembles on each DNA strand where it exits the tetramer. Each RuvB hexamer is contacted by two RuvA subunits (via domain III) on 2 adjacent RuvB subunits; this complex drives branch migration. In the full resolvosome a probable DNA-RuvA(4)-RuvB(12)-RuvC(2) complex forms which resolves the HJ.

Its subcellular location is the cytoplasm. The enzyme catalyses ATP + H2O = ADP + phosphate + H(+). Its function is as follows. The RuvA-RuvB-RuvC complex processes Holliday junction (HJ) DNA during genetic recombination and DNA repair, while the RuvA-RuvB complex plays an important role in the rescue of blocked DNA replication forks via replication fork reversal (RFR). RuvA specifically binds to HJ cruciform DNA, conferring on it an open structure. The RuvB hexamer acts as an ATP-dependent pump, pulling dsDNA into and through the RuvAB complex. RuvB forms 2 homohexamers on either side of HJ DNA bound by 1 or 2 RuvA tetramers; 4 subunits per hexamer contact DNA at a time. Coordinated motions by a converter formed by DNA-disengaged RuvB subunits stimulates ATP hydrolysis and nucleotide exchange. Immobilization of the converter enables RuvB to convert the ATP-contained energy into a lever motion, pulling 2 nucleotides of DNA out of the RuvA tetramer per ATP hydrolyzed, thus driving DNA branch migration. The RuvB motors rotate together with the DNA substrate, which together with the progressing nucleotide cycle form the mechanistic basis for DNA recombination by continuous HJ branch migration. Branch migration allows RuvC to scan DNA until it finds its consensus sequence, where it cleaves and resolves cruciform DNA. In Thermus thermophilus (strain ATCC BAA-163 / DSM 7039 / HB27), this protein is Holliday junction branch migration complex subunit RuvB.